We begin with the raw amino-acid sequence, 249 residues long: FMN reductase [NAD(P)H] (249 aa).

Residues 11-15 (HRSIR), glutamine 67, 134-136 (PIG), and 173-175 (KPR) contribute to the FMN site.

The protein belongs to the flavin oxidoreductase frp family. Homodimer.

The catalysed reaction is FMNH2 + NADP(+) = FMN + NADPH + 2 H(+). It catalyses the reaction FMNH2 + NAD(+) = FMN + NADH + 2 H(+). With respect to regulation, FMN is a competitive inhibitor of NADH, and therefore leads to the preferential utilization of NADPH. Its function is as follows. Reduces FMNH(2) to FMN, with NADH or NADPH as reductant. It also reduces nitroaromatic compounds, quinones, chromates and azo dyes. It could supply the reduced form of FMN to luciferase-like protein and contribute to the degradation of aromatic compounds. The polypeptide is FMN reductase [NAD(P)H] (nfrA2) (Bacillus subtilis (strain 168)).